We begin with the raw amino-acid sequence, 398 residues long: Metalloprotease MmpA (398 aa).

Histidine 22 lines the Zn(2+) pocket. Glutamate 23 is an active-site residue. A Zn(2+)-binding site is contributed by histidine 26. 3 consecutive transmembrane segments (helical) span residues 117–139 (FIAV…VILV), 316–338 (QFWL…IPVL), and 362–381 (AAGF…FAAW). The 74-residue stretch at 130–203 (AILVFAVILV…MPIDFAVERD (74 aa)) folds into the PDZ domain.

It belongs to the peptidase M50B family. It depends on Zn(2+) as a cofactor.

The protein resides in the cell inner membrane. Functionally, involved in the regulated intramembrane proteolysis (RIP) of the short isoform of PodJ protein (PodJS), during the swarmer-to-stalked transition. The cleavage occurs near or within the single transmembrane of PodJS thereby releasing the N-terminal segment into the cytoplasm for subsequent degradation. It contributes to preserve asymmetry in the next cell cycle through sequential degradation. The sequence is that of Metalloprotease MmpA (mmpA) from Caulobacter vibrioides (strain ATCC 19089 / CIP 103742 / CB 15) (Caulobacter crescentus).